The primary structure comprises 260 residues: Proteasome subunit alpha type-1 (260 aa).

Residues 240–260 (PRTTGGAAAAAAPGGAEPMQM) are disordered. Over residues 244 to 260 (GGAAAAAAPGGAEPMQM) the composition is skewed to low complexity.

It belongs to the peptidase T1A family. In terms of assembly, the 26S proteasome consists of a 20S proteasome core and two 19S regulatory subunits. The 20S proteasome core is composed of 28 subunits that are arranged in four stacked rings, resulting in a barrel-shaped structure. The two end rings are each formed by seven alpha subunits, and the two central rings are each formed by seven beta subunits. The catalytic chamber with the active sites is on the inside of the barrel.

It localises to the cytoplasm. The protein localises to the nucleus. Its function is as follows. The proteasome is a multicatalytic proteinase complex which is characterized by its ability to cleave peptides with Arg, Phe, Tyr, Leu, and Glu adjacent to the leaving group at neutral or slightly basic pH. The proteasome has an ATP-dependent proteolytic activity. This Caenorhabditis elegans protein is Proteasome subunit alpha type-1 (pas-6).